The primary structure comprises 372 residues: Maltose/maltodextrin import ATP-binding protein MalK (372 aa).

Residues 4–234 (VTLKNVCKAY…PQNRFVAGFI (231 aa)) enclose the ABC transporter domain. Residue 36-43 (GPSGCGKS) participates in ATP binding.

It belongs to the ABC transporter superfamily. Maltooligosaccharide importer (TC 3.A.1.1.1) family. The complex is composed of two ATP-binding proteins (MalK), two transmembrane proteins (MalG and MalK) and a solute-binding protein (MalE).

Its subcellular location is the cell inner membrane. It carries out the reaction D-maltose(out) + ATP + H2O = D-maltose(in) + ADP + phosphate + H(+). In terms of biological role, part of the ABC transporter complex MalEFGK involved in maltose/maltodextrin import. Responsible for energy coupling to the transport system. The protein is Maltose/maltodextrin import ATP-binding protein MalK of Vibrio parahaemolyticus serotype O3:K6 (strain RIMD 2210633).